The chain runs to 189 residues: SAGA-associated factor 11 homolog (189 aa).

The SGF11-type zinc finger occupies 94–115; that stretch reads CTCPNCDRLVAATRFAPHLEKC. A disordered region spans residues 128–189; that stretch reads RRLATKEGSS…GSKKNNGKTF (62 aa). The segment covering 136–145 has biased composition (low complexity); sequence SSASSTSTST. Serine 165 is modified (phosphoserine). Low complexity predominate over residues 175-189; sequence NSRNNGSKKNNGKTF.

The protein belongs to the SGF11 family. As to quaternary structure, component of some SAGA transcription coactivator-HAT complexes, at least composed of Ada2b, not/nonstop, Pcaf/Gcn5, Sgf11 and Spt3. Within the SAGA complex, Sgf11, e(y)2, and not/nonstop form an additional subcomplex of SAGA called the DUB module (deubiquitination module). Interacts directly with not/nonstop. Interacts with the AMEX complex component xmas-2. Interacts with Cbp80; important for promoter recruitment of Sgf11 that is not associated with the DUB module.

It is found in the nucleus. It localises to the nucleoplasm. Its subcellular location is the cytoplasm. Its function is as follows. Component of the transcription regulatory histone acetylation (HAT) complex SAGA, a multiprotein complex that activates transcription by remodeling chromatin and mediating histone acetylation and deubiquitination. Within the SAGA complex, participates in a subcomplex that specifically deubiquitinates histone H2B. The SAGA complex is recruited to specific gene promoters by activators, where it is required for transcription. Required for nuclear receptor-mediated transactivation. Binds independently on SAGA to promoters in an RNA-dependent manner. Binds to mRNA and is essential for total mRNA export from the nucleus. Required to counteract heterochromatin silencing. Controls the development of neuronal connectivity in visual system by being required for accurate axon targeting in the optic lobe. Required for expression of ecdysone-induced genes such as br/broad. The chain is SAGA-associated factor 11 homolog from Drosophila virilis (Fruit fly).